The sequence spans 120 residues: NAD(P)H-quinone oxidoreductase subunit 3 (120 aa).

The next 3 membrane-spanning stretches (helical) occupy residues 10–32, 64–84, and 89–109; these read LLGFLLLCSLVPALALSASKVLR, MFALVFVIFDVETVFLYPWAV, and LGVLAFIEALIFIAILIVGLV.

It belongs to the complex I subunit 3 family. In terms of assembly, NDH-1 can be composed of about 15 different subunits; different subcomplexes with different compositions have been identified which probably have different functions.

It is found in the cellular thylakoid membrane. It carries out the reaction a plastoquinone + NADH + (n+1) H(+)(in) = a plastoquinol + NAD(+) + n H(+)(out). The enzyme catalyses a plastoquinone + NADPH + (n+1) H(+)(in) = a plastoquinol + NADP(+) + n H(+)(out). Functionally, NDH-1 shuttles electrons from an unknown electron donor, via FMN and iron-sulfur (Fe-S) centers, to quinones in the respiratory and/or the photosynthetic chain. The immediate electron acceptor for the enzyme in this species is believed to be plastoquinone. Couples the redox reaction to proton translocation, and thus conserves the redox energy in a proton gradient. Cyanobacterial NDH-1 also plays a role in inorganic carbon-concentration. In Acaryochloris marina (strain MBIC 11017), this protein is NAD(P)H-quinone oxidoreductase subunit 3.